Reading from the N-terminus, the 246-residue chain is MSSSSSSPFPQAMKNGEYRNWAELPPELTSSILLRLGAIEILQNAQRVCKSWRRVCQDPSMWRKIDIRIKENLVNSVELFYVIEPLCCRAVDLSQGGLLEINIDYLVNTSFLNYIADRSSNLRRLGVVDCAPVLSRGVVEAAMKLPLLEELDITYKSSIREQELKVVGQSCPNLRTLKLNCTGDVKCCDKVALAIAETMPGLRHLQLFRNGLSETGLNAILEGCPHLKNLGLHQCLNINIVGDIVK.

Residues 18–65 (YRNWAELPPELTSSILLRLGAIEILQNAQRVCKSWRRVCQDPSMWRKI) enclose the F-box domain.

This Arabidopsis thaliana (Mouse-ear cress) protein is Putative F-box/LRR-repeat protein 9 (FBL9).